A 502-amino-acid chain; its full sequence is MKIFLVFLSVFFFNGCFGLVYKTPISSSPISYDPYTTPIGSLYAEKLKENPNHSAAILLEDGFDALLHRVGLIRMSQKSIDMQTYIYKNDLSSQVIAKELLNAANRGVKVRILLDDNGLDSDFSDIMLLNFHKNIEVKIFNPYYIRNKGLRYFEMLADYERIKKRMHNKLFIVDNFAVIIGGRNIGDNYFDNDLDTNFLDLDALFFGGVASKAKESFERYWRFHRSIPVSLLRTHKRLKNNAKEIAKLHEKIPISAEDKNQFEKKVNDFIDRFQKYQYPIYYGNAIFLADSPKKIDTPLYSPIKIAFEKALKNAKDSVFIASSYFIPGKKMMKIFKNQISKGIELNILTNSLSSTDAIVVYGAWERYRNQLVRMGANVYEIRNDFFNRQIKGRFSTKHSLHGKTIVFDDNLTLLGSFNIDPRSAYINTESAVLFDNPSFAKRVRLSLKDHAQQSWHLVVYRHRVIWEAVEEGILIHEKTSPDTSFFLRLIKEWSKVLPEREL.

The chain crosses the membrane as a helical span at residues 1–21 (MKIFLVFLSVFFFNGCFGLVY). 2 consecutive PLD phosphodiesterase domains span residues 162–189 (IKKRMHNKLFIVDNFAVIIGGRNIGDNY) and 396–423 (TKHSLHGKTIVFDDNLTLLGSFNIDPRS).

This sequence belongs to the phospholipase D family. Cardiolipin synthase subfamily.

The protein resides in the cell membrane. This is an uncharacterized protein from Helicobacter pylori (strain ATCC 700392 / 26695) (Campylobacter pylori).